Consider the following 250-residue polypeptide: Accessory gland-specific peptide 26Aa (250 aa).

The signal sequence occupies residues 1 to 18 (MNQILLCSQILLLFFTVA). The segment at 79 to 100 (DYPINNSKSRKNSSTLPSPILT) is disordered. Positions 82 to 95 (INNSKSRKNSSTLP) are enriched in polar residues. Asn83, Asn90, and Asn131 each carry an N-linked (GlcNAc...) asparagine glycan. 2 disordered regions span residues 172–191 (NVQNARKSTKSCKKRPSKDI) and 230–250 (NNPATDVPTGKSPSEGNPSTT). Over residues 178–187 (KSTKSCKKRP) the composition is skewed to basic residues. Residues 240 to 250 (KSPSEGNPSTT) show a composition bias toward polar residues.

Post-translationally, proteolytically cleaved as it is secreted and in the recipient female. In terms of tissue distribution, main cells of the accessory glands of males.

It localises to the secreted. The protein localises to the extracellular space. This protein is transferred from male to female's hemolymph during mating, affecting egglaying and behavior after mating. This Drosophila mauritiana (Fruit fly) protein is Accessory gland-specific peptide 26Aa (Acp26Aa).